The following is a 385-amino-acid chain: MSSDGEFTRTQIFGTVFEITNRYTDLNPVGMGAFGLVCSAVDKLTGQNVAVKKIMKPFSTSVLAKRTYRELKLLKHLKHENLITLDDIFLSPLEDIYFVNELQGTDLHRLLTSRPLEKQFIQYFTYQILRGLKYIHSAGVIHRDLKPSNILINENCDLKICDFGLARIQDPQMTGYVSTRYYRAPEIMLTWQKYDTEVDLWSVGCILAEMIEGKPLFPGKDHVHQFSIITELLGSPPPDVIDTICSENTLRFVQSLPHRDPIPFNERFAQCTHVEPEAIDLLAKMLIFDPKKRISAASALTHPYMEPYHDPTDEPICETKFDWSFNDADLPVDTWRVMMYSEILDFHQIGGVGEEAGQSVTQEEIAHIQQDGIQAPQQPQEQQVE.

In terms of domain architecture, Protein kinase spans 23–305 (YTDLNPVGMG…AASALTHPYM (283 aa)). Residues 29–37 (VGMGAFGLV) and K52 each bind ATP. D144 serves as the catalytic Proton acceptor. T174 is subject to Phosphothreonine. Positions 174 to 176 (TGY) match the TXY motif. Phosphotyrosine is present on Y176.

The protein belongs to the protein kinase superfamily. Ser/Thr protein kinase family. MAP kinase subfamily. HOG1 sub-subfamily. Mg(2+) serves as cofactor. In terms of processing, dually phosphorylated on Thr-174 and Tyr-176, which activates the enzyme.

The protein resides in the cytoplasm. Its subcellular location is the nucleus. It carries out the reaction L-seryl-[protein] + ATP = O-phospho-L-seryl-[protein] + ADP + H(+). It catalyses the reaction L-threonyl-[protein] + ATP = O-phospho-L-threonyl-[protein] + ADP + H(+). Activated by tyrosine and threonine phosphorylation. In terms of biological role, proline-directed serine/threonine-protein kinase involved in a signal transduction pathway that is activated by changes in the osmolarity of the extracellular environment. Controls osmotic regulation of transcription of target genes. This is Mitogen-activated protein kinase HOG1 (HOG1) from Scheffersomyces stipitis (strain ATCC 58785 / CBS 6054 / NBRC 10063 / NRRL Y-11545) (Yeast).